Consider the following 344-residue polypeptide: L-threonine 3-dehydrogenase (344 aa).

A Zn(2+)-binding site is contributed by Cys38. Residues Thr40 and His43 each act as charge relay system in the active site. His63, Glu64, Cys93, Cys96, Cys99, and Cys107 together coordinate Zn(2+). NAD(+)-binding positions include Ile175, Asp195, Arg200, 263 to 265 (LGI), and 287 to 288 (IY).

The protein belongs to the zinc-containing alcohol dehydrogenase family. As to quaternary structure, homotetramer. It depends on Zn(2+) as a cofactor.

The protein localises to the cytoplasm. It catalyses the reaction L-threonine + NAD(+) = (2S)-2-amino-3-oxobutanoate + NADH + H(+). It participates in amino-acid degradation; L-threonine degradation via oxydo-reductase pathway; glycine from L-threonine: step 1/2. Its function is as follows. Catalyzes the NAD(+)-dependent oxidation of L-threonine to 2-amino-3-ketobutyrate. The sequence is that of L-threonine 3-dehydrogenase from Deinococcus deserti (strain DSM 17065 / CIP 109153 / LMG 22923 / VCD115).